Consider the following 371-residue polypeptide: Lombricine kinase (371 aa).

Residues 1-86 (MPKFTARQNF…FDAVINEKHG (86 aa)) form the Phosphagen kinase N-terminal domain. Positions 113 to 355 (YVKSARIRTG…GKLIEYEKLL (243 aa)) constitute a Phosphagen kinase C-terminal domain. Residues 116-120 (SARIR), His179, Arg224, Arg280, 308-313 (RGTGGE), and Asp323 contribute to the ATP site.

This sequence belongs to the ATP:guanido phosphotransferase family. As to quaternary structure, homodimer.

It carries out the reaction L-lombricine + ATP = N-phospho-L-lombricine + ADP + H(+). The chain is Lombricine kinase from Eisenia fetida (Red wiggler worm).